The sequence spans 201 residues: Recombination protein RecR (201 aa).

Residues 60–75 (CKTCGNIDTQNPCTVC) form a C4-type zinc finger. The Toprim domain maps to 83-178 (AIIVVVADVA…KVTRLAHGVP (96 aa)).

The protein belongs to the RecR family.

Its function is as follows. May play a role in DNA repair. It seems to be involved in an RecBC-independent recombinational process of DNA repair. It may act with RecF and RecO. This is Recombination protein RecR from Rhodopseudomonas palustris (strain BisA53).